The primary structure comprises 527 residues: Glutamate--cysteine ligase (527 aa).

It belongs to the glutamate--cysteine ligase type 1 family. Type 1 subfamily.

The enzyme catalyses L-cysteine + L-glutamate + ATP = gamma-L-glutamyl-L-cysteine + ADP + phosphate + H(+). Its pathway is sulfur metabolism; glutathione biosynthesis; glutathione from L-cysteine and L-glutamate: step 1/2. This chain is Glutamate--cysteine ligase, found in Pseudomonas paraeruginosa (strain DSM 24068 / PA7) (Pseudomonas aeruginosa (strain PA7)).